The chain runs to 287 residues: tRNA pseudouridine synthase B (287 aa).

Asp-38 functions as the Nucleophile in the catalytic mechanism.

Belongs to the pseudouridine synthase TruB family. Type 1 subfamily.

The catalysed reaction is uridine(55) in tRNA = pseudouridine(55) in tRNA. In terms of biological role, responsible for synthesis of pseudouridine from uracil-55 in the psi GC loop of transfer RNAs. In Aquifex aeolicus (strain VF5), this protein is tRNA pseudouridine synthase B.